A 684-amino-acid polypeptide reads, in one-letter code: U4/U6 small nuclear ribonucleoprotein Prp3 (684 aa).

The PWI domain occupies 1–87 (MSLSKRELDE…HSKSNSDRNR (87 aa)). Positions 73-107 (GRSSRHSKSNSDRNRKRELKDVFGDDSEVSKESSG) are enriched in basic and acidic residues. 2 disordered regions span residues 73-109 (GRSSRHSKSNSDRNRKRELKDVFGDDSEVSKESSGVK) and 162-183 (FISPPTPQPKISSSSQSERLPI). Polar residues predominate over residues 170–183 (PKISSSSQSERLPI).

As to quaternary structure, component of the precatalytic spliceosome (spliceosome B complex). Component of the U4/U6-U5 tri-snRNP complex, a building block of the precatalytic spliceosome (spliceosome B complex). The U4/U6-U5 tri-snRNP complex is composed of the U4, U6 and U5 snRNAs and at least PRPF3, PRPF4, PRPF6, PRPF8, PRPF31, SNRNP200, TXNL4A, SNRNP40, SNRPB, SNRPD1, SNRPD2, SNRPD3, SNRPE, SNRPF, SNRPG, DDX23, CD2BP2, PPIH, SNU13, EFTUD2, SART1 and USP39, plus LSM2, LSM3, LSM4, LSM5, LSM6, LSM7 and LSM8.

The protein resides in the nucleus. It is found in the nucleus speckle. Its function is as follows. Plays a role in pre-mRNA splicing as component of the U4/U6-U5 tri-snRNP complex that is involved in spliceosome assembly, and as component of the precatalytic spliceosome (spliceosome B complex). This Gallus gallus (Chicken) protein is U4/U6 small nuclear ribonucleoprotein Prp3 (PRPF3).